We begin with the raw amino-acid sequence, 134 residues long: Small ribosomal subunit protein uS8c (134 aa).

The protein belongs to the universal ribosomal protein uS8 family. Part of the 30S ribosomal subunit.

Its subcellular location is the plastid. Its function is as follows. One of the primary rRNA binding proteins, it binds directly to 16S rRNA central domain where it helps coordinate assembly of the platform of the 30S subunit. In Cuscuta gronovii (Common dodder), this protein is Small ribosomal subunit protein uS8c (rps8).